Reading from the N-terminus, the 124-residue chain is MNQRKPANNSLIDNCLTLTGIVTSIVKQSQSPLGIPNYSFWLEHRSNKMEVNLERQVWCKIQVILNGCQFSLITQQIKLGDKVKISGFIHTHKDYNGLSKLVLHTEQIEFIDQEKPNGTLFPSS.

In terms of domain architecture, SSB spans 12-112 (IDNCLTLTGI…LHTEQIEFID (101 aa)).

Belongs to the PriB family. Homodimer. Interacts with PriA and DnaT. Component of the replication restart primosome. Primosome assembly occurs via a 'hand-off' mechanism. PriA binds to replication forks, subsequently PriB then DnaT bind; DnaT then displaces ssDNA to generate the helicase loading substrate.

Its function is as follows. Involved in the restart of stalled replication forks, which reloads the replicative helicase on sites other than the origin of replication; the PriA-PriB pathway is the major replication restart pathway. During primosome assembly it facilitates complex formation between PriA and DnaT on DNA; stabilizes PriA on DNA. Stimulates the DNA unwinding activity of PriA helicase. This chain is Replication restart protein PriB, found in Haemophilus ducreyi (strain 35000HP / ATCC 700724).